The following is a 545-amino-acid chain: Esterase-5C (545 aa).

The first 19 residues, 1–19 (MLAARLIILLSFYWLSASA), serve as a signal peptide directing secretion. Residues C84 and C103 are joined by a disulfide bond. An N-linked (GlcNAc...) asparagine glycan is attached at N113. S207 serves as the catalytic Acyl-ester intermediate. A disulfide bond links C259 and C271. An N-linked (GlcNAc...) asparagine glycan is attached at N421. The Charge relay system role is filled by H467. N507 carries an N-linked (GlcNAc...) asparagine glycan. C515 and C536 are oxidised to a cystine.

The protein belongs to the type-B carboxylesterase/lipase family.

It localises to the secreted. It carries out the reaction a carboxylic ester + H2O = an alcohol + a carboxylate + H(+). This Drosophila miranda (Fruit fly) protein is Esterase-5C (Est-5C).